Here is a 461-residue protein sequence, read N- to C-terminus: PE-PGRS family protein PE_PGRS45 (461 aa).

The PE domain occupies 4–92 (VNVAPQLVST…GSTYAVAEAA (89 aa)). Disordered stretches follow at residues 232–251 (GGAG…GGNG) and 426–461 (AGSL…GADG). Residues 434–446 (PGFGGPGGSGGAS) show a composition bias toward gly residues.

The protein belongs to the mycobacterial PE family. PGRS subfamily. As to quaternary structure, interacts with human TIMM23, which is part of a complex that mediates the translocation of transit peptide-containing proteins across the mitochondrial inner membrane.

It localises to the cell membrane. The protein localises to the secreted. The protein resides in the cell wall. It is found in the host mitochondrion. The catalysed reaction is hexadecanal + NADP(+) + CoA = hexadecanoyl-CoA + NADPH + H(+). Its activity is regulated as follows. Oxidoreductase activity is inhibited by the first line anti-tubercular drug isoniazid (INH). Functionally, may be an effector protein that contributes to pathogenesis by targeting host mitochondria, where it modulates host cellular processes. In THP1 macrophages, increases the ADP-to-ATP ratio and increases the cellular ROS levels. Also induces mitochondrial perturbations through membrane depolarization, release of mitochondrial superoxide, up-regulation of expression of host proapoptotic proteins (BAX and BIM) and release of cytochrome C into the cytosol. May bind calcium to increase intracellular calcium influx, which may further lead to mitochondrial perturbations. Mitochondrial perturbations and alteration of Ca(2+) influx are independent but simultaneous events. In terms of biological role, in vitro, shows NADPH-dependent fatty acyl coenzyme A oxidoreductase activity. Can oxidize palmitoyl-CoA, but not glutathione and thiourea. This is PE-PGRS family protein PE_PGRS45 from Mycobacterium tuberculosis (strain ATCC 25618 / H37Rv).